The primary structure comprises 380 residues: Phospho-N-acetylmuramoyl-pentapeptide-transferase (380 aa).

Transmembrane regions (helical) follow at residues 25 to 45, 70 to 90, 98 to 118, 142 to 162, 173 to 193, 209 to 229, 245 to 265, 272 to 294, and 357 to 377; these read RAAAAFVTALLVSFILGPAII, TTPTMGGLIILAATFAPVLLW, VLLAMAVTAWMGVIGFLDDYL, VLCGLGLGAYLLLSPISTLPG, VLVVPAVAWAAWLYIPWVTFI, GLSSGLVAIAVLTLGLFAYVL, GAGELTVFCAAVVGACIGFLW, QVFMGDTGSLALGGAVGAIAILL, and QVVVRFWIIGILCAILALSTL.

Belongs to the glycosyltransferase 4 family. MraY subfamily. Requires Mg(2+) as cofactor.

Its subcellular location is the cell inner membrane. The enzyme catalyses UDP-N-acetyl-alpha-D-muramoyl-L-alanyl-gamma-D-glutamyl-meso-2,6-diaminopimeloyl-D-alanyl-D-alanine + di-trans,octa-cis-undecaprenyl phosphate = di-trans,octa-cis-undecaprenyl diphospho-N-acetyl-alpha-D-muramoyl-L-alanyl-D-glutamyl-meso-2,6-diaminopimeloyl-D-alanyl-D-alanine + UMP. It functions in the pathway cell wall biogenesis; peptidoglycan biosynthesis. Its function is as follows. Catalyzes the initial step of the lipid cycle reactions in the biosynthesis of the cell wall peptidoglycan: transfers peptidoglycan precursor phospho-MurNAc-pentapeptide from UDP-MurNAc-pentapeptide onto the lipid carrier undecaprenyl phosphate, yielding undecaprenyl-pyrophosphoryl-MurNAc-pentapeptide, known as lipid I. The protein is Phospho-N-acetylmuramoyl-pentapeptide-transferase of Gemmatimonas aurantiaca (strain DSM 14586 / JCM 11422 / NBRC 100505 / T-27).